Here is a 308-residue protein sequence, read N- to C-terminus: Large ribosomal subunit protein mL38 (308 aa).

A mitochondrion-targeting transit peptide spans 1–17 (MKRVWPRIPTISNVCRA).

It belongs to the phosphatidylethanolamine-binding protein family. Mitochondrion-specific ribosomal protein mL38 subfamily. In terms of assembly, component of the mitochondrial large ribosomal subunit (mt-LSU). Mature yeast 74S mitochondrial ribosomes consist of a small (37S) and a large (54S) subunit. The 37S small subunit contains a 15S ribosomal RNA (15S mt-rRNA) and at least 32 different proteins. The 54S large subunit contains a 21S rRNA (21S mt-rRNA) and at least 45 different proteins.

Its subcellular location is the mitochondrion. Component of the mitochondrial ribosome (mitoribosome), a dedicated translation machinery responsible for the synthesis of mitochondrial genome-encoded proteins, including at least some of the essential transmembrane subunits of the mitochondrial respiratory chain. The mitoribosomes are attached to the mitochondrial inner membrane and translation products are cotranslationally integrated into the membrane. This is Large ribosomal subunit protein mL38 (mrpl35) from Schizosaccharomyces pombe (strain 972 / ATCC 24843) (Fission yeast).